Here is a 298-residue protein sequence, read N- to C-terminus: Porphobilinogen deaminase (298 aa).

Cys-239 is modified (S-(dipyrrolylmethanemethyl)cysteine).

It belongs to the HMBS family. In terms of assembly, monomer. The cofactor is dipyrromethane.

It catalyses the reaction 4 porphobilinogen + H2O = hydroxymethylbilane + 4 NH4(+). It participates in porphyrin-containing compound metabolism; protoporphyrin-IX biosynthesis; coproporphyrinogen-III from 5-aminolevulinate: step 2/4. Its function is as follows. Tetrapolymerization of the monopyrrole PBG into the hydroxymethylbilane pre-uroporphyrinogen in several discrete steps. This chain is Porphobilinogen deaminase, found in Ehrlichia chaffeensis (strain ATCC CRL-10679 / Arkansas).